The following is a 348-amino-acid chain: Mitogen-activated protein kinase 14B (348 aa).

The 285-residue stretch at Tyr-25–Phe-309 folds into the Protein kinase domain. ATP contacts are provided by residues Val-31–Val-39 and Lys-54. Asp-169 (proton acceptor) is an active-site residue. Thr-181 carries the phosphothreonine; by MAP2K3 modification. The TXY signature appears at Thr-181–Tyr-183. Tyr-183 is subject to Phosphotyrosine; by MAP2K3.

This sequence belongs to the protein kinase superfamily. CMGC Ser/Thr protein kinase family. MAP kinase subfamily. It depends on Mg(2+) as a cofactor. In terms of processing, dually phosphorylated on Thr-181 and Tyr-183, which activates the enzyme.

Its subcellular location is the cytoplasm. The protein localises to the nucleus. It catalyses the reaction L-seryl-[protein] + ATP = O-phospho-L-seryl-[protein] + ADP + H(+). The enzyme catalyses L-threonyl-[protein] + ATP = O-phospho-L-threonyl-[protein] + ADP + H(+). Its activity is regulated as follows. Activated by threonine and tyrosine phosphorylation by the dual specificity kinase, MKK3. Functionally, serine/threonine kinase which acts as an essential component of the MAP kinase signal transduction pathway. Mapk14b is one of the four p38 MAPKs which play an important role in the cascades of cellular responses evoked by extracellular stimuli such as pro-inflammatory cytokines or physical stress leading to direct activation of transcription factors. Accordingly, p38 MAPKs phosphorylate a broad range of proteins and it has been estimated that they may have approximately 200 to 300 substrates each. Some of the targets are downstream kinases which are activated through phosphorylation and further phosphorylate additional targets. The chain is Mitogen-activated protein kinase 14B (mapk14b) from Danio rerio (Zebrafish).